The chain runs to 201 residues: Superoxide dismutase [Mn] (201 aa).

Mn(2+) is bound by residues His-27, His-81, Asp-163, and His-167.

This sequence belongs to the iron/manganese superoxide dismutase family. As to quaternary structure, homodimer. The cofactor is Mn(2+).

It catalyses the reaction 2 superoxide + 2 H(+) = H2O2 + O2. Its function is as follows. Destroys superoxide anion radicals which are normally produced within the cells and which are toxic to biological systems. May play a critical role against oxidative stress, affecting both the survival and the virulence of S.pneumoniae. This is Superoxide dismutase [Mn] (sodA) from Streptococcus pneumoniae serotype 4 (strain ATCC BAA-334 / TIGR4).